A 157-amino-acid chain; its full sequence is Small ribosomal subunit protein uS7 (157 aa).

Belongs to the universal ribosomal protein uS7 family. Part of the 30S ribosomal subunit. Contacts proteins S9 and S11.

Its function is as follows. One of the primary rRNA binding proteins, it binds directly to 16S rRNA where it nucleates assembly of the head domain of the 30S subunit. Is located at the subunit interface close to the decoding center, probably blocks exit of the E-site tRNA. This chain is Small ribosomal subunit protein uS7, found in Phenylobacterium zucineum (strain HLK1).